The primary structure comprises 119 residues: V-type proton ATPase subunit F (119 aa).

Belongs to the V-ATPase F subunit family. As to quaternary structure, V-ATPase is a heteromultimeric enzyme made up of two complexes: the ATP-hydrolytic V1 complex and the proton translocation V0 complex. The V1 complex consists of three catalytic AB heterodimers that form a heterohexamer, three peripheral stalks each consisting of EG heterodimers, one central rotor including subunits D and F, and the regulatory subunits C and H. The proton translocation complex V0 consists of the proton transport subunit a, a ring of proteolipid subunits c9c'', rotary subunit d, subunits e and f, and the accessory subunits ATP6AP1/Ac45 and ATP6AP2/PRR.

Its subcellular location is the cytoplasmic vesicle. It is found in the secretory vesicle. The protein resides in the synaptic vesicle membrane. It localises to the clathrin-coated vesicle membrane. Functionally, subunit of the V1 complex of vacuolar(H+)-ATPase (V-ATPase), a multisubunit enzyme composed of a peripheral complex (V1) that hydrolyzes ATP and a membrane integral complex (V0) that translocates protons. V-ATPase is responsible for acidifying and maintaining the pH of intracellular compartments and in some cell types, is targeted to the plasma membrane, where it is responsible for acidifying the extracellular environment. In Mus musculus (Mouse), this protein is V-type proton ATPase subunit F (Atp6v1f).